The chain runs to 569 residues: Carotenoid cleavage dioxygenase 8 homolog B, chloroplastic (569 aa).

A chloroplast-targeting transit peptide spans 1-43; the sequence is MSPAMLQASSLCVSAALSGAASRPGRLASQGHQGKRAVAQPLA. The segment at 23 to 81 is disordered; sequence RPGRLASQGHQGKRAVAQPLAASAVTEAAPPAPVVAPPARPVDAPRRRGGRGGGGGGGE. Pro residues predominate over residues 52 to 62; that stretch reads PPAPVVAPPAR. Residues His251, His301, His368, and His558 each coordinate Fe cation.

It belongs to the carotenoid oxygenase family. Fe(2+) is required as a cofactor. As to expression, expressed in parenchyma cells of the root stele, shoot apex, leaf buds, xylem parenchyma cells of the stem, inflorescences and panicles.

It is found in the plastid. It localises to the chloroplast. The enzyme catalyses 9-cis-10'-apo-beta-carotenal + 2 O2 = (2E,4E,6E)-7-hydroxy-4-methylhepta-2,4,6-trienal + (11R)-carlactone. It carries out the reaction all-trans-10'-apo-beta-carotenal + O2 = (2E,4E,6E)-4-methylocta-2,4,6-trienedial + 13-apo-beta-carotenone. Involved in strigolactones biosynthesis by cleaving the C(27) 9-cis-10'-apo-beta-carotenal produced by CCD7. Produces the C(19) carlactone and a C(8) hydroxyaldehyde. Also shows lower activity with all-trans-10'-apo-beta-carotenal producing a C(9) dialdehyde and the C(18) 13-apo-beta-carotenone. Strigolactones are hormones that inhibit tillering and shoot branching through the MAX-dependent pathway, contribute to the regulation of shoot architectural response to phosphate-limiting conditions and function as rhizosphere signal that stimulates hyphal branching of arbuscular mycorrhizal fungi and trigger seed germination of root parasitic weeds. The sequence is that of Carotenoid cleavage dioxygenase 8 homolog B, chloroplastic (CCD8B) from Oryza sativa subsp. japonica (Rice).